The primary structure comprises 454 residues: tRNA-2-methylthio-N(6)-dimethylallyladenosine synthase (454 aa).

In terms of domain architecture, MTTase N-terminal spans 6–122 (RRYHITTFGC…LKDLLESVFA (117 aa)). Residues C15, C51, C85, C157, C161, and C164 each coordinate [4Fe-4S] cluster. The Radical SAM core domain maps to 143-380 (RDSTVTAWVN…NHLVNVKAAE (238 aa)). One can recognise a TRAM domain in the interval 383–447 (QRYMGRIEEV…AFSLTGEPIE (65 aa)).

The protein belongs to the methylthiotransferase family. MiaB subfamily. Monomer. [4Fe-4S] cluster is required as a cofactor.

The protein localises to the cytoplasm. The enzyme catalyses N(6)-dimethylallyladenosine(37) in tRNA + (sulfur carrier)-SH + AH2 + 2 S-adenosyl-L-methionine = 2-methylsulfanyl-N(6)-dimethylallyladenosine(37) in tRNA + (sulfur carrier)-H + 5'-deoxyadenosine + L-methionine + A + S-adenosyl-L-homocysteine + 2 H(+). Functionally, catalyzes the methylthiolation of N6-(dimethylallyl)adenosine (i(6)A), leading to the formation of 2-methylthio-N6-(dimethylallyl)adenosine (ms(2)i(6)A) at position 37 in tRNAs that read codons beginning with uridine. The polypeptide is tRNA-2-methylthio-N(6)-dimethylallyladenosine synthase (Nostoc sp. (strain PCC 7120 / SAG 25.82 / UTEX 2576)).